We begin with the raw amino-acid sequence, 236 residues long: MTAVQEERTTEELKALAERAGRELEDATALEILRWAAETFGDRFCVTSSMEDAVVAHLASRALPGVDVVFLDTGYHFPETIGTRDAVEAVMDVNVITLTPRQTVAEQDAEYGPKLHDRDPDLCCALRKVKPLEEGLAGYRAWATGLRRDESETRANTPVVGWDEKRGKVKISPIAKWSQEDVQTYVTEHGVLTNPLLTDGYASVGCAPCTRRVLEGEDARAGRWAGRSKTECGLHG.

[4Fe-4S] cluster-binding residues include Cys-123, Cys-124, Cys-206, and Cys-209. The Nucleophile; cysteine thiosulfonate intermediate role is filled by Cys-232.

This sequence belongs to the PAPS reductase family. CysH subfamily. The cofactor is [4Fe-4S] cluster.

The protein resides in the cytoplasm. It catalyses the reaction [thioredoxin]-disulfide + sulfite + AMP + 2 H(+) = adenosine 5'-phosphosulfate + [thioredoxin]-dithiol. It participates in sulfur metabolism; hydrogen sulfide biosynthesis; sulfite from sulfate. Catalyzes the formation of sulfite from adenosine 5'-phosphosulfate (APS) using thioredoxin as an electron donor. In Streptomyces coelicolor (strain ATCC BAA-471 / A3(2) / M145), this protein is Adenosine 5'-phosphosulfate reductase.